A 259-amino-acid polypeptide reads, in one-letter code: Zinc import ATP-binding protein ZnuC (259 aa).

The ABC transporter domain occupies 22 to 238 (VEARGLTVRR…PEYRALFGAH (217 aa)). 54–61 (GPNGSGKS) contacts ATP.

The protein belongs to the ABC transporter superfamily. Zinc importer (TC 3.A.1.15.5) family. As to quaternary structure, the complex is composed of two ATP-binding proteins (ZnuC), two transmembrane proteins (ZnuB) and a solute-binding protein (ZnuA).

It is found in the cell inner membrane. The catalysed reaction is Zn(2+)(out) + ATP(in) + H2O(in) = Zn(2+)(in) + ADP(in) + phosphate(in) + H(+)(in). Functionally, part of the ABC transporter complex ZnuABC involved in zinc import. Responsible for energy coupling to the transport system. The sequence is that of Zinc import ATP-binding protein ZnuC from Alkalilimnicola ehrlichii (strain ATCC BAA-1101 / DSM 17681 / MLHE-1).